Reading from the N-terminus, the 608-residue chain is Phosphoenolpyruvate carboxykinase [GTP] (608 aa).

Substrate contacts are provided by residues Arg82 and 222–224; that span reads YGG. 2 residues coordinate Mn(2+): Lys231 and His251. Position 273 (Ser273) interacts with substrate. 274–279 contributes to the GTP binding site; that stretch reads ACGKTN. Residue Cys275 is part of the active site. Position 298 (Asp298) interacts with Mn(2+). Residue 389–391 participates in substrate binding; it reads NSR. GTP is bound by residues Arg391, Arg422, and 517–520; that span reads FGDN.

It belongs to the phosphoenolpyruvate carboxykinase [GTP] family. Monomer. Requires Mn(2+) as cofactor.

It is found in the cytoplasm. The catalysed reaction is oxaloacetate + GTP = phosphoenolpyruvate + GDP + CO2. The protein operates within carbohydrate biosynthesis; gluconeogenesis. Catalyzes the conversion of oxaloacetate (OAA) to phosphoenolpyruvate (PEP), the rate-limiting step in the metabolic pathway that produces glucose from lactate and other precursors derived from the citric acid cycle. This Paenarthrobacter aurescens (strain TC1) protein is Phosphoenolpyruvate carboxykinase [GTP].